Consider the following 320-residue polypeptide: 4-hydroxyproline 2-epimerase (320 aa).

Cysteine 98 acts as the Proton acceptor in catalysis. Residues 99–100, histidine 218, and aspartate 242 each bind substrate; that span reads GH. The active-site Proton donor is cysteine 246. A substrate-binding site is contributed by 247-248; it reads GT.

This sequence belongs to the proline racemase family.

It catalyses the reaction trans-4-hydroxy-L-proline = cis-4-hydroxy-D-proline. Its function is as follows. Catalyzes the epimerization of trans-4-hydroxy-L-proline (t4LHyp) to cis-4-hydroxy-D-proline (c4DHyp). Is likely involved in a degradation pathway that converts t4LHyp to alpha-ketoglutarate. Displays no proline racemase activity. This is 4-hydroxyproline 2-epimerase from Burkholderia pseudomallei (strain 1710b).